The chain runs to 111 residues: Anti-adapter protein IraM (111 aa).

Belongs to the IraM/RssC family.

It localises to the cytoplasm. Functionally, involved in the stabilization of the sigma stress factor RpoS. In Cronobacter sakazakii (strain ATCC BAA-894) (Enterobacter sakazakii), this protein is Anti-adapter protein IraM.